The chain runs to 985 residues: Alpha-glucosidase (985 aa).

Positions 1–25 (MVKLTHLLARAWLVPLAYGASQSLL) are cleaved as a signal peptide. T36 is a glycosylation site (O-linked (Man) threonine). 5 N-linked (GlcNAc...) asparagine glycosylation sites follow: N124, N143, N218, N347, and N422. D490 acts as the Nucleophile in catalysis. E493 is a catalytic residue. N-linked (GlcNAc...) asparagine glycans are attached at residues N506, N534, and N537. O-linked (Man) serine glycosylation is found at S545 and S550. T559 is a glycosylation site (O-linked (Man) threonine). O-linked (Man) serine glycosylation occurs at S560. O-linked (Man) threonine glycosylation is present at T561. An O-linked (Man) serine glycan is attached at S562. O-linked (Man) threonine glycosylation occurs at T571. Residues N601 and N623 are each glycosylated (N-linked (GlcNAc...) asparagine). D660 (proton donor) is an active-site residue. N-linked (GlcNAc...) asparagine glycans are attached at residues N835 and N881. O-linked (Man) serine glycosylation is present at S895. Residues N899, N957, and N970 are each glycosylated (N-linked (GlcNAc...) asparagine).

Belongs to the glycosyl hydrolase 31 family. The O-linked saccharide is not identified, but is probably mannose.

It catalyses the reaction Hydrolysis of terminal, non-reducing (1-&gt;4)-linked alpha-D-glucose residues with release of alpha-D-glucose.. Functionally, hydrolyzes malto-oligosaccharides, but has a low activity toward soluble starch. This chain is Alpha-glucosidase (aglA), found in Aspergillus niger.